Consider the following 517-residue polypeptide: Cytochrome P450 monooxygenase cdmJ (517 aa).

The chain crosses the membrane as a helical span at residues 15 to 35 (YMWSLTLFALCLSAILMFPFL). N-linked (GlcNAc...) asparagine glycosylation is present at N404. A heme-binding site is contributed by C451.

The protein belongs to the cytochrome P450 family. It depends on heme as a cofactor.

It is found in the membrane. The enzyme catalyses 3-hydroxypentacecilide A + NADPH + O2 + H(+) = chrodrimanin F + NADP(+) + H2O. It carries out the reaction chrodrimanin C + NADPH + O2 + H(+) = chrodrimanin H + NADP(+) + H2O. The catalysed reaction is verruculide A + NADPH + O2 + H(+) = chrodrimanin E + NADP(+) + H2O. It catalyses the reaction chrodrimanin T + NADPH + O2 + H(+) = chrodrimanin A + NADP(+) + H2O. It participates in secondary metabolite biosynthesis; terpenoid biosynthesis. Cytochrome P450 monooxygenase; part of the gene cluster that mediates the biosynthesis of chrodrimanin B, a meroterpenoid that acts as a potent blocker of insect GABA-gated chloride channels. The first step of the pathway is the biosynthesis of 6-hydroxymellein by the polyketide synthase cdmE. The prenyltransferase cdmH acts as a 6-hydroxymellein 5-farnesyltransferase and produces the hydrophobic metabolite verruculide C. The FAD-dependent monooxygenase cdmI further converts verruculide C into verruculide B. The terpene cyclase cdmG then produced the pentacyclic molecule 3-hydroxypentacecilide A, the backbone structure of chrodrimanin B, via folding the farnesyl moiety of the substrate into the chair-boat conformation. The short-chain dehydrogenase/reductase cdmF functions as the 3-OH dehydrogenase that oxidizes the C-3 hydroxyl group of 3-hydroxypentacecilide A and produces chrodrimanin C, the dehydrogenated product of 3-hydroxypentacecilide A. The cytochrome P450 monooxygenase cdmJ then accepts both 3-hydroxypentacecilide A and chrodrimanin C and functions as a C-7-beta-hydroxylase to produce respectively chrodrimanin H and chrodrimanin F. The dioxygenase cdmA accepts chrodrimanin H to afford chrodrimanin E, which is further transformed to chrodrimanin A by the dioxygenase cdmD. CdmA can also accept chrodrimanin C as substrate to convert it into verruculide A, which is further converted into chrodrimanin T by cdmD. The last step of the biosynthesis is proposed to be performed by the acetyltransferase cdmC which acetylates chrodrimanin A to yield chrodrimanin B. The pathway may also lead to the production of additional shunt products, including chrodrimanins T and U. The chain is Cytochrome P450 monooxygenase cdmJ from Talaromyces verruculosus (Penicillium verruculosum).